Consider the following 313-residue polypeptide: Aspartate carbamoyltransferase catalytic subunit (313 aa).

R55 and T56 together coordinate carbamoyl phosphate. K83 is a binding site for L-aspartate. Residues R105, H138, and Q141 each coordinate carbamoyl phosphate. L-aspartate contacts are provided by R171 and R225. 2 residues coordinate carbamoyl phosphate: G266 and P267.

The protein belongs to the aspartate/ornithine carbamoyltransferase superfamily. ATCase family. As to quaternary structure, heterododecamer (2C3:3R2) of six catalytic PyrB chains organized as two trimers (C3), and six regulatory PyrI chains organized as three dimers (R2).

It carries out the reaction carbamoyl phosphate + L-aspartate = N-carbamoyl-L-aspartate + phosphate + H(+). It participates in pyrimidine metabolism; UMP biosynthesis via de novo pathway; (S)-dihydroorotate from bicarbonate: step 2/3. Its function is as follows. Catalyzes the condensation of carbamoyl phosphate and aspartate to form carbamoyl aspartate and inorganic phosphate, the committed step in the de novo pyrimidine nucleotide biosynthesis pathway. The chain is Aspartate carbamoyltransferase catalytic subunit from Corynebacterium diphtheriae (strain ATCC 700971 / NCTC 13129 / Biotype gravis).